Consider the following 112-residue polypeptide: Toxin-like structure LSTX-D10 (112 aa).

A signal peptide spans 1 to 20 (MMKVLVVVALLVTLISYSSS). The propeptide occupies 21 to 41 (EGIDDLEADELLSLMANEQTR). 4 disulfides stabilise this stretch: C45-C60, C52-C69, C59-C84, and C71-C82.

The protein belongs to the neurotoxin 19 (CSTX) family. 01 subfamily. In terms of tissue distribution, expressed by the venom gland.

Its subcellular location is the secreted. This is Toxin-like structure LSTX-D10 from Lycosa singoriensis (Wolf spider).